The chain runs to 351 residues: Anthranilate phosphoribosyltransferase (351 aa).

Residues Gly80, 83 to 84 (GD), Thr88, 90 to 93 (NIST), 108 to 116 (KHGNRSITS), and Ser120 contribute to the 5-phospho-alpha-D-ribose 1-diphosphate site. Gly80 serves as a coordination point for anthranilate. Ser92 lines the Mg(2+) pocket. Residue Asn111 participates in anthranilate binding. Arg166 lines the anthranilate pocket. Residues Asp229 and Glu230 each coordinate Mg(2+).

Belongs to the anthranilate phosphoribosyltransferase family. As to quaternary structure, homodimer. It depends on Mg(2+) as a cofactor.

The catalysed reaction is N-(5-phospho-beta-D-ribosyl)anthranilate + diphosphate = 5-phospho-alpha-D-ribose 1-diphosphate + anthranilate. The protein operates within amino-acid biosynthesis; L-tryptophan biosynthesis; L-tryptophan from chorismate: step 2/5. Its function is as follows. Catalyzes the transfer of the phosphoribosyl group of 5-phosphorylribose-1-pyrophosphate (PRPP) to anthranilate to yield N-(5'-phosphoribosyl)-anthranilate (PRA). The polypeptide is Anthranilate phosphoribosyltransferase (Chlorobaculum parvum (strain DSM 263 / NCIMB 8327) (Chlorobium vibrioforme subsp. thiosulfatophilum)).